The sequence spans 207 residues: SPRY domain-containing protein 4 (207 aa).

In terms of domain architecture, B30.2/SPRY spans 12 to 207 (YRWGTKRWGV…HSGLEVPKGL (196 aa)). N6-acetyllysine occurs at positions 53 and 130. Lys-139 carries the post-translational modification N6-succinyllysine.

In Mus musculus (Mouse), this protein is SPRY domain-containing protein 4 (Spryd4).